The sequence spans 207 residues: Large ribosomal subunit protein bL25 (207 aa).

It belongs to the bacterial ribosomal protein bL25 family. CTC subfamily. In terms of assembly, part of the 50S ribosomal subunit; part of the 5S rRNA/L5/L18/L25 subcomplex. Contacts the 5S rRNA. Binds to the 5S rRNA independently of L5 and L18.

Functionally, this is one of the proteins that binds to the 5S RNA in the ribosome where it forms part of the central protuberance. This is Large ribosomal subunit protein bL25 from Dictyoglomus turgidum (strain DSM 6724 / Z-1310).